The chain runs to 775 residues: Coiled-coil domain-containing protein R3HCC1L (775 aa).

Composition is skewed to basic and acidic residues over residues 1–16 (MQQE…KRPD) and 65–112 (ESQR…KGAE). Disordered stretches follow at residues 1–127 (MQQE…HRAP) and 235–262 (LSSD…DISV). Residues 7–27 (RCRVRTKRPDMALYVPKARRG) form an EJC-binding motif; may mediate interaction with the EJC region. Residues 235–247 (LSSDSETAPSSLE) are compositionally biased toward polar residues. At serine 671 the chain carries Phosphoserine. Threonine 695 is subject to Phosphothreonine. Residues 734–766 (RSKQSKTEREAELRKLQEARERKRLEAKQREDI) adopt a coiled-coil conformation. The tract at residues 755–775 (RKRLEAKQREDIWEGRDQSVV) is disordered.

May interact with the exon junction complex (EJC) composed at least of CASC3, EIF4A3, MAGOH and RBM8A.

The protein is Coiled-coil domain-containing protein R3HCC1L (R3hcc1l) of Mus musculus (Mouse).